The chain runs to 486 residues: Ribulose bisphosphate carboxylase large chain (486 aa).

Positions 126 and 176 each coordinate substrate. Lys178 serves as the catalytic Proton acceptor. Lys180 contacts substrate. Residues Lys204, Asp206, and Glu207 each contribute to the Mg(2+) site. Lys204 is subject to N6-carboxylysine. The Proton acceptor role is filled by His296. Residues Arg297, His329, and Ser381 each contribute to the substrate site.

It belongs to the RuBisCO large chain family. Type I subfamily. Heterohexadecamer of 8 large chains and 8 small chains. The cofactor is Mg(2+).

It catalyses the reaction 2 (2R)-3-phosphoglycerate + 2 H(+) = D-ribulose 1,5-bisphosphate + CO2 + H2O. The enzyme catalyses D-ribulose 1,5-bisphosphate + O2 = 2-phosphoglycolate + (2R)-3-phosphoglycerate + 2 H(+). Its function is as follows. RuBisCO catalyzes two reactions: the carboxylation of D-ribulose 1,5-bisphosphate, the primary event in carbon dioxide fixation, as well as the oxidative fragmentation of the pentose substrate. Both reactions occur simultaneously and in competition at the same active site. The sequence is that of Ribulose bisphosphate carboxylase large chain from Methylacidiphilum infernorum (isolate V4) (Methylokorus infernorum (strain V4)).